A 906-amino-acid chain; its full sequence is Protein translocase subunit SecA (906 aa).

Residues Q89, 107–111 (GEGKT), and D502 contribute to the ATP site. The segment at 829–898 (EAPPEPELPP…ACPCGSGKKY (70 aa)) is disordered. Positions 858–877 (WSDHQHDERNVPAAERDPAD) are enriched in basic and acidic residues. Zn(2+) is bound by residues C890, C892, C901, and H902.

This sequence belongs to the SecA family. Monomer and homodimer. Part of the essential Sec protein translocation apparatus which comprises SecA, SecYEG and auxiliary proteins SecDF-YajC and YidC. It depends on Zn(2+) as a cofactor.

It localises to the cell inner membrane. Its subcellular location is the cytoplasm. The catalysed reaction is ATP + H2O + cellular proteinSide 1 = ADP + phosphate + cellular proteinSide 2.. In terms of biological role, part of the Sec protein translocase complex. Interacts with the SecYEG preprotein conducting channel. Has a central role in coupling the hydrolysis of ATP to the transfer of proteins into and across the cell membrane, serving both as a receptor for the preprotein-SecB complex and as an ATP-driven molecular motor driving the stepwise translocation of polypeptide chains across the membrane. The polypeptide is Protein translocase subunit SecA (Brucella anthropi (strain ATCC 49188 / DSM 6882 / CCUG 24695 / JCM 21032 / LMG 3331 / NBRC 15819 / NCTC 12168 / Alc 37) (Ochrobactrum anthropi)).